A 275-amino-acid polypeptide reads, in one-letter code: MTTYAVGDLQGCLEPLTCLLERVDFSPSRDCLWLAGDLVNRGPQSLEALRFVRDLESSAITVLGNHDLHLLAVAHNIERMRKSDTLQAILDAPDRADLIDWLRQQKLIHYDAERHTAMVHAGIPPQWSLEKALRRAAEVEQALQDDALLLPFLDGMYGNQPAKWNKELHGVPRLRLITNYFTRMRFCKADGTLDLDAKEGADSAPAGYAPWFSHASRKTRNVKLIFGHWAALEGQCDEPNVFALDTGCVWGNAMTLMNLDSGEMHRCECEHGKPA.

It belongs to the Ap4A hydrolase family.

The catalysed reaction is P(1),P(4)-bis(5'-adenosyl) tetraphosphate + H2O = 2 ADP + 2 H(+). Functionally, hydrolyzes diadenosine 5',5'''-P1,P4-tetraphosphate to yield ADP. The polypeptide is Bis(5'-nucleosyl)-tetraphosphatase, symmetrical (Stutzerimonas stutzeri (strain A1501) (Pseudomonas stutzeri)).